The primary structure comprises 684 residues: MLKCICRVYSQPLAQMVTSPLFKHMGSAGTYTILPITNLRHLSTKNCPLKIKSNRSEPLQFGDFERQVPCSRKSGSSKNVQKRLYELRQLKTVLSETFGVTEYASFFESLRNALHINNCSENEKKKLLYDIILHQHELYPEVARKIGFYLPGEVHRWFWYRIPKSESFNHYLFLLKSDVLLFTSNYCTRFTNRLIKGTEMERQLATFQIFLHDETNIKFIMEKVLKLHTFDSLIALVNGLVKAKNFRFIKVFIQALLQKLEQHCYSGKDGAKQKNLRYVKFNNTLLYYLLKSGNVELFIKTFQEELKFIVSSGLLNHIDGNEHILNFPIHHYLNLLRISNRQEELFNVISCLQSSPLMKYKLFKEFLMGELIASFQAFRDPKLVCKYLLSSYSSKASANILNALGIWGWLYHSKSTTLTAPTLARELKNKNNILPNTMRIGSPVTVPILTELYRSLLSSSSVSLESGQFKNCLLDLYYKYKSFLSEEAHKYRYWRNDTGILNVFLNYIRFQAREPRLAYNVLLDFYSQPFAKKVVLTTTLCPFSIVAYKNHTLTQAELSELLQVMHKNGVPLTFKFCSAMVMHYVKMRDEKGARSWYNKILFGGFEIRHMALIQIIKDQGWPFPKNFDETLLTELVENNNIKEPTDSTLFTDEDMFEEDGKPRFNDDDVNKCTNIIRETLKSLN.

Residues 1 to 56 (MLKCICRVYSQPLAQMVTSPLFKHMGSAGTYTILPITNLRHLSTKNCPLKIKSNRS) constitute a mitochondrion transit peptide.

The protein belongs to the ATP22 family.

Its subcellular location is the mitochondrion inner membrane. Functionally, translation factor specific for subunit 6 of the mitochondrial ATPase. Required for assembly of the CF(0) component of the ATPase. The polypeptide is Mitochondrial translation factor ATP22 (ATP22) (Saccharomyces cerevisiae (strain AWRI1631) (Baker's yeast)).